A 223-amino-acid chain; its full sequence is Enolase-phosphatase E1 (223 aa).

This sequence belongs to the HAD-like hydrolase superfamily. MasA/MtnC family. Monomer. The cofactor is Mg(2+).

The catalysed reaction is 5-methylsulfanyl-2,3-dioxopentyl phosphate + H2O = 1,2-dihydroxy-5-(methylsulfanyl)pent-1-en-3-one + phosphate. It participates in amino-acid biosynthesis; L-methionine biosynthesis via salvage pathway; L-methionine from S-methyl-5-thio-alpha-D-ribose 1-phosphate: step 3/6. Its pathway is amino-acid biosynthesis; L-methionine biosynthesis via salvage pathway; L-methionine from S-methyl-5-thio-alpha-D-ribose 1-phosphate: step 4/6. In terms of biological role, bifunctional enzyme that catalyzes the enolization of 2,3-diketo-5-methylthiopentyl-1-phosphate (DK-MTP-1-P) into the intermediate 2-hydroxy-3-keto-5-methylthiopentenyl-1-phosphate (HK-MTPenyl-1-P), which is then dephosphorylated to form the acireductone 1,2-dihydroxy-3-keto-5-methylthiopentene (DHK-MTPene). The protein is Enolase-phosphatase E1 of Aquifex aeolicus (strain VF5).